Reading from the N-terminus, the 55-residue chain is Accessory gland-specific peptide 70A (55 aa).

Residues 1 to 19 (MKTLSVFLVLVCLLGLVQS) form the signal peptide. 4 positions are modified to hydroxyproline: proline 28, proline 32, proline 34, and proline 38. Cysteines 43 and 55 form a disulfide.

Main cells of the accessory glands of males (paragonial gland).

Its subcellular location is the secreted. Represses female sexual receptivity and stimulates oviposition. In Drosophila sechellia (Fruit fly), this protein is Accessory gland-specific peptide 70A (Acp70A).